A 516-amino-acid chain; its full sequence is MNAVVASQNKNDRSFSNMESESSSNVEKSEKENHHQSLPDENWTPFLFFCISSIALASFQDGFQIGCINAPGPLIIDWIKKCHFELFGEVLSQYQADFIWSVAVSMFSVGGMFGSFCSGFLADKFGRKSTLLYNNILALLAAVCLSTSKLFNFYPMIVFGRFLVGLNCGITSGLVPMFLTELAPANLRGKCGSFHQLNISVAIVLSQALGLPQIFGTQVGWPYIFACVAIPTFLQLATIPFCVESPKYLISKLNDREEARRILEKLRGHTKVDEELEHMVQETMVTVEPLHQPGYVSLFKGDNQWPMIVSILMMFSQQFSGISAVTFYSTLIFKRNGLSGNEPMYATVGFGCIKLIATFGCLFLIDHPKFGRKRLHIAGLSGMCISSILIVITLTLSNAGYHWASYMNVLFILSFVVTFAFGPGPIPWFFTSELFDSATRGRAAAVSATSNWVANWMVGLTFLPINNIIHQYAFLMFTFFTFTFAIFTWKFVPETKGKSPSAIRKELAFMRKRICS.

Positions methionine 1 to serine 37 are disordered. The Cytoplasmic portion of the chain corresponds to methionine 1–leucine 47. Residues serine 14 to valine 26 are compositionally biased toward low complexity. Basic and acidic residues predominate over residues glutamate 27–serine 37. The helical transmembrane segment at phenylalanine 48–isoleucine 68 threads the bilayer. The Extracellular portion of the chain corresponds to asparagine 69–serine 101. The chain crosses the membrane as a helical span at residues valine 102–alanine 122. Topologically, residues aspartate 123 to alanine 138 are cytoplasmic. The chain crosses the membrane as a helical span at residues leucine 139–phenylalanine 159. Residues glycine 160 to arginine 161 are Extracellular-facing. A helical transmembrane segment spans residues phenylalanine 162–leucine 182. Topologically, residues alanine 183–serine 200 are cytoplasmic. A helical membrane pass occupies residues valine 201–tryptophan 221. Proline 222 is a topological domain (extracellular). A helical transmembrane segment spans residues tyrosine 223–valine 243. The Cytoplasmic portion of the chain corresponds to glutamate 244–proline 306. A helical membrane pass occupies residues methionine 307–phenylalanine 327. Residues tyrosine 328 to methionine 344 lie on the Extracellular side of the membrane. Residues tyrosine 345 to isoleucine 365 traverse the membrane as a helical segment. Topologically, residues aspartate 366–histidine 376 are cytoplasmic. A helical membrane pass occupies residues isoleucine 377–serine 397. The Extracellular portion of the chain corresponds to asparagine 398–valine 409. Residues leucine 410 to phenylalanine 430 form a helical membrane-spanning segment. The Cytoplasmic portion of the chain corresponds to threonine 431 to alanine 444. Residues alanine 445–isoleucine 465 traverse the membrane as a helical segment. Topologically, residues asparagine 466–glutamine 471 are extracellular. Residues tyrosine 472–valine 492 form a helical membrane-spanning segment. Topologically, residues proline 493 to serine 516 are cytoplasmic.

This sequence belongs to the major facilitator superfamily. Sugar transporter (TC 2.A.1.1) family. Expressed in seam cells from the early embryonic stage through the L2 stage (at protein level).

The protein localises to the cell membrane. Appears to have no transport activity for glucose. The sequence is that of Facilitated glucose transporter homolog from Caenorhabditis elegans.